The following is a 340-amino-acid chain: Probable sugar phosphate/phosphate translocator At3g14410 (340 aa).

The next 10 helical transmembrane spans lie at 12–32, 44–64, 80–100, 110–130, 141–161, 163–183, 197–217, 234–254, 260–282, and 286–305; these read EFVTYAYILLYIALSSGQIFF, FPYPLGLTLLHMIFSSVLCFL, LEIYVTSVIPIGAMFAMTLWL, VAFAQMLKAIMPVAVFILGVA, LLIMSIISFGVLVASYGELNI, WIGVVYQMGGVVGEALRLIFM, ISLMYYVSPCSAICLFVPWIF, VVLTLNSLCTFALNLSVFLVI, LTIRVAGVVKDWVVVLVSALLFA, and LTIINLFGYAIAIAGVAAYN. Residues 320–340 are disordered; the sequence is ETPGDAESIPLVSQGNTNTER. Over residues 330-340 the composition is skewed to polar residues; it reads LVSQGNTNTER.

It belongs to the TPT transporter family. TPT (TC 2.A.7.9) subfamily.

The protein localises to the membrane. This chain is Probable sugar phosphate/phosphate translocator At3g14410, found in Arabidopsis thaliana (Mouse-ear cress).